The primary structure comprises 359 residues: Peptide chain release factor 1 (359 aa).

The residue at position 236 (glutamine 236) is an N5-methylglutamine. The interval 288–308 is disordered; sequence QDEQDAERKSTIGTGDRSERI. The segment covering 293–308 has biased composition (basic and acidic residues); the sequence is AERKSTIGTGDRSERI.

It belongs to the prokaryotic/mitochondrial release factor family. Post-translationally, methylated by PrmC. Methylation increases the termination efficiency of RF1.

It localises to the cytoplasm. Functionally, peptide chain release factor 1 directs the termination of translation in response to the peptide chain termination codons UAG and UAA. The polypeptide is Peptide chain release factor 1 (Streptococcus uberis (strain ATCC BAA-854 / 0140J)).